The chain runs to 435 residues: GTPase Der (435 aa).

EngA-type G domains are found at residues 4–167 and 175–350; these read PIVA…SPDA and ISFS…ENKN. Residues 10–17, 57–61, 119–122, 181–188, 228–232, and 293–296 contribute to the GTP site; these read GQPNVGKS, DTGGI, NKAD, GRPNVGKS, DTAGI, and NKWD. The KH-like domain maps to 351–435; it reads QRIQSSVLND…PIKILPRKRK (85 aa).

This sequence belongs to the TRAFAC class TrmE-Era-EngA-EngB-Septin-like GTPase superfamily. EngA (Der) GTPase family. In terms of assembly, associates with the 50S ribosomal subunit.

Its function is as follows. GTPase that plays an essential role in the late steps of ribosome biogenesis. The polypeptide is GTPase Der (Lactobacillus delbrueckii subsp. bulgaricus (strain ATCC 11842 / DSM 20081 / BCRC 10696 / JCM 1002 / NBRC 13953 / NCIMB 11778 / NCTC 12712 / WDCM 00102 / Lb 14)).